The sequence spans 353 residues: Photosystem II protein D1 (353 aa).

At T2 the chain carries N-acetylthreonine. At T2 the chain carries Phosphothreonine. A run of 3 helical transmembrane segments spans residues 29–46, 118–133, and 142–156; these read YIGW…TATS, HFLL…EWEL, and WIAV…AATA. H118 lines the chlorophyll a pocket. Y126 serves as a coordination point for pheophytin a. [CaMn4O5] cluster is bound by residues D170 and E189. The helical transmembrane segment at 197–218 threads the bilayer; sequence FHMLGVAGVFGGSLFSAMHGSL. H198 contacts chlorophyll a. Residues H215 and 264–265 each bind a quinone; that span reads SF. Position 215 (H215) interacts with Fe cation. A Fe cation-binding site is contributed by H272. The chain crosses the membrane as a helical span at residues 274 to 288; that stretch reads FLAAWPVVCIWFTAL. [CaMn4O5] cluster-binding residues include H332, E333, D342, and A344. The propeptide occupies 345–353; the sequence is SVDAPAVQG.

The protein belongs to the reaction center PufL/M/PsbA/D family. PSII is composed of 1 copy each of membrane proteins PsbA, PsbB, PsbC, PsbD, PsbE, PsbF, PsbH, PsbI, PsbJ, PsbK, PsbL, PsbM, PsbT, PsbX, PsbY, PsbZ, Psb30/Ycf12, at least 3 peripheral proteins of the oxygen-evolving complex and a large number of cofactors. It forms dimeric complexes. Requires The D1/D2 heterodimer binds P680, chlorophylls that are the primary electron donor of PSII, and subsequent electron acceptors. It shares a non-heme iron and each subunit binds pheophytin, quinone, additional chlorophylls, carotenoids and lipids. D1 provides most of the ligands for the Mn4-Ca-O5 cluster of the oxygen-evolving complex (OEC). There is also a Cl(-1) ion associated with D1 and D2, which is required for oxygen evolution. The PSII complex binds additional chlorophylls, carotenoids and specific lipids. as cofactor. In terms of processing, tyr-161 forms a radical intermediate that is referred to as redox-active TyrZ, YZ or Y-Z. C-terminally processed by CTPA; processing is essential to allow assembly of the oxygen-evolving complex and thus photosynthetic growth.

It is found in the plastid. The protein localises to the chloroplast thylakoid membrane. It carries out the reaction 2 a plastoquinone + 4 hnu + 2 H2O = 2 a plastoquinol + O2. Functionally, photosystem II (PSII) is a light-driven water:plastoquinone oxidoreductase that uses light energy to abstract electrons from H(2)O, generating O(2) and a proton gradient subsequently used for ATP formation. It consists of a core antenna complex that captures photons, and an electron transfer chain that converts photonic excitation into a charge separation. The D1/D2 (PsbA/PsbD) reaction center heterodimer binds P680, the primary electron donor of PSII as well as several subsequent electron acceptors. This chain is Photosystem II protein D1, found in Nephroselmis olivacea (Green alga).